The following is a 161-amino-acid chain: Putative pre-16S rRNA nuclease (161 aa).

The protein belongs to the YqgF nuclease family.

It localises to the cytoplasm. Its function is as follows. Could be a nuclease involved in processing of the 5'-end of pre-16S rRNA. The polypeptide is Putative pre-16S rRNA nuclease (Rhodospirillum rubrum (strain ATCC 11170 / ATH 1.1.1 / DSM 467 / LMG 4362 / NCIMB 8255 / S1)).